We begin with the raw amino-acid sequence, 300 residues long: Junctional adhesion molecule A (300 aa).

The first 26 residues, 1–26 (MGTEGKAGSKLLFLFTSMILGSLVQG), serve as a signal peptide directing secretion. At 27–238 (KGSVYSPQTA…MEAVELNVGG (212 aa)) the chain is on the extracellular side. 2 Ig-like V-type domains span residues 28–122 (GSVY…GEVS) and 134–228 (PTVS…EAVR). 2 disulfides stabilise this stretch: Cys49-Cys108 and Cys152-Cys212. N-linked (GlcNAc...) asparagine glycosylation is present at Asn185. The chain crosses the membrane as a helical span at residues 239 to 259 (IVAAVLVTLILLGLLIFGIWF). Residues 260-300 (AYSRGYFERTKKGTAPGKKVIYSQPSARSEGEFKQTSSFLV) lie on the Cytoplasmic side of the membrane. A phosphoserine mark is found at Ser282, Ser285, and Ser288.

The protein belongs to the immunoglobulin superfamily. As to quaternary structure, interacts with the ninth PDZ domain of MPDZ. Interacts with the first PDZ domain of PARD3. The association between PARD3 and PARD6B probably disrupts this interaction. Interacts with ITGAL (via I-domain). Interacts with CD151. In terms of processing, N-glycosylated.

The protein resides in the cell junction. The protein localises to the tight junction. It localises to the cell membrane. Its function is as follows. Seems to play a role in epithelial tight junction formation. Appears early in primordial forms of cell junctions and recruits PARD3. The association of the PARD6-PARD3 complex may prevent the interaction of PARD3 with JAM1, thereby preventing tight junction assembly. Plays a role in regulating monocyte transmigration involved in integrity of epithelial barrier. Ligand for integrin alpha-L/beta-2 involved in memory T-cell and neutrophil transmigration. The sequence is that of Junctional adhesion molecule A (F11r) from Rattus norvegicus (Rat).